The primary structure comprises 2271 residues: Serine-rich adhesin for platelets (2271 aa).

A signal peptide spans 1–89 (MSKRQKAFHD…VNMLHDQQAF (89 aa)). The serine-rich repeat region 1, SRR1 stretch occupies residues 90–230 (AASDAPLTSE…KTSTTSTSTA (141 aa)). Positions 100–111 (LNTQSETVGNQN) are enriched in polar residues. Disordered regions lie at residues 100 to 229 (LNTQ…STST), 751 to 791 (NSMS…VVST), and 806 to 2243 (SVSA…GLLG). Low complexity predominate over residues 112 to 128 (STTIEASTSTADSTSVT). Positions 129 to 140 (KNSSSVQTSNSD) are enriched in polar residues. Low complexity predominate over residues 150–229 (VTSTTNSTSN…NKTSTTSTST (80 aa)). The interval 231-751 (PVKLRTFSRL…TTFKYEVTRN (521 aa)) is non-repeat region (NRR). Composition is skewed to low complexity over residues 752–791 (SMSD…VVST), 806–1392 (SVSA…LSLS), and 1402–2214 (SNSA…ATSE). The tract at residues 752–2232 (SMSDSVSTSG…AQSEKRLPDT (1481 aa)) is serine-rich repeat region 2, SRR2. The LPXTG sorting signal signature appears at 2229–2233 (LPDTG). Threonine 2232 bears the Pentaglycyl murein peptidoglycan amidated threonine mark. The propeptide at 2233–2271 (GDSIKQNGLLGGVMTLLVGLGLMKRKKKKDENDQDDSQA) is removed by sortase.

This sequence belongs to the serine-rich repeat protein (SRRP) family. Proteolytically cleaved by a metalloprotease. In terms of processing, glycosylated. It is probable that most of the Ser residues in SSR1 and SSR2 are O-GlcNAcylated. Sequential glycosylation by sugar transferases are able to generate complex sugar polymorphisms.

The protein resides in the secreted. Its subcellular location is the cell wall. Mediates binding to human platelets, possibly through a receptor-ligand interaction. Probably associated with virulence in endovascular infection. This is Serine-rich adhesin for platelets (sraP) from Staphylococcus aureus (strain Mu50 / ATCC 700699).